The primary structure comprises 189 residues: Peptidyl-tRNA hydrolase (189 aa).

Y15 contributes to the tRNA binding site. H20 acts as the Proton acceptor in catalysis. TRNA is bound by residues F66, N68, and N114.

Belongs to the PTH family. Monomer.

Its subcellular location is the cytoplasm. It catalyses the reaction an N-acyl-L-alpha-aminoacyl-tRNA + H2O = an N-acyl-L-amino acid + a tRNA + H(+). Functionally, hydrolyzes ribosome-free peptidyl-tRNAs (with 1 or more amino acids incorporated), which drop off the ribosome during protein synthesis, or as a result of ribosome stalling. Its function is as follows. Catalyzes the release of premature peptidyl moieties from peptidyl-tRNA molecules trapped in stalled 50S ribosomal subunits, and thus maintains levels of free tRNAs and 50S ribosomes. This is Peptidyl-tRNA hydrolase from Streptococcus equi subsp. zooepidemicus (strain MGCS10565).